Reading from the N-terminus, the 280-residue chain is Meiotic driver wtf35 (280 aa).

The segment covering 1-29 has biased composition (basic and acidic residues); that stretch reads MKNKDYPLRTSMDELSTKNDNEIDLEKGP. Disordered regions lie at residues 1-49 and 64-100; these read MKNK…DLNN and NKSTTPPDYDENRLPITDEGNNPPNTHRENHSSGTTD. 4 helical membrane-spanning segments follow: residues 105–125, 142–162, 184–204, and 218–238; these read FLIKLLISFTSIILFNAPAVC, WTLIGFWCASSLIIFTFSWYF, IPMAFSEVFLFNILVGSPRVA, and SLADHIIFAILSILVFIVETV.

Belongs to the WTF family. In terms of assembly, homomer. Forms protein aggregates. The two isoforms can interact with each other and with themselves. High sequence similarity is required for their interaction.

Its subcellular location is the spore membrane. It localises to the vacuole membrane. It is found in the ascus epiplasm. The protein localises to the cytoplasm. The protein resides in the endoplasmic reticulum membrane. Its function is as follows. Promotes unequal transmission of alleles from the parental zygote to progeny spores by acting as poison/antidote system where the poison and antidote proteins are produced from the same locus; the poison component is trans-acting and targets all spores within an ascus whereas the antidote component is spore-specific, leading to poisoning of all progeny that do not inherit the allele. In terms of biological role, localizes isoform 2 to the vacuole thereby facilitating its degradation. Forms toxic aggregates that disrupt spore maturation. This Schizosaccharomyces pombe (Fission yeast) protein is Meiotic driver wtf35.